The following is a 118-amino-acid chain: Protein TusC (118 aa).

It belongs to the DsrF/TusC family. As to quaternary structure, heterohexamer, formed by a dimer of trimers. The hexameric TusBCD complex contains 2 copies each of TusB, TusC and TusD. The TusBCD complex interacts with TusE.

The protein resides in the cytoplasm. Its function is as follows. Part of a sulfur-relay system required for 2-thiolation of 5-methylaminomethyl-2-thiouridine (mnm(5)s(2)U) at tRNA wobble positions. The chain is Protein TusC from Salmonella gallinarum (strain 287/91 / NCTC 13346).